The following is a 235-amino-acid chain: Pathogen-related protein (235 aa).

The polypeptide is Pathogen-related protein (Hordeum vulgare (Barley)).